The following is a 701-amino-acid chain: Potassium-transporting ATPase ATP-binding subunit (701 aa).

Residues 1–28 (MNPDAPTPKNKSSRSRPSDRPQARKKAK) are disordered. The next 4 membrane-spanning stretches (helical) occupy residues 57-77 (MFLV…PNLF), 90-110 (GILT…EAVA), 245-265 (VLLA…PVFA), and 276-296 (ILVA…LSAI). Asp329 functions as the 4-aspartylphosphate intermediate in the catalytic mechanism. ATP is bound by residues Asp366, Glu370, 397–404 (FSAKTRMS), and Lys416. Residues Asp539 and Asp543 each coordinate Mg(2+). Transmembrane regions (helical) follow at residues 599 to 619 (FSLA…FASA), 635 to 655 (AVLS…PLAL), and 681 to 701 (VIAP…VGLA).

Belongs to the cation transport ATPase (P-type) (TC 3.A.3) family. Type IA subfamily. In terms of assembly, the system is composed of three essential subunits: KdpA, KdpB and KdpC.

The protein resides in the cell membrane. It catalyses the reaction K(+)(out) + ATP + H2O = K(+)(in) + ADP + phosphate + H(+). Its function is as follows. Part of the high-affinity ATP-driven potassium transport (or Kdp) system, which catalyzes the hydrolysis of ATP coupled with the electrogenic transport of potassium into the cytoplasm. This subunit is responsible for energy coupling to the transport system and for the release of the potassium ions to the cytoplasm. This is Potassium-transporting ATPase ATP-binding subunit from Anabaena sp. (strain L31).